We begin with the raw amino-acid sequence, 299 residues long: Dihydroorotate dehydrogenase B (NAD(+)), catalytic subunit (299 aa).

FMN-binding positions include Ser-21 and 44–45; that span reads KS. Substrate contacts are provided by residues Lys-44, 68–72, and Asn-125; that span reads NAVGL. Asn-125 provides a ligand contact to FMN. Cys-128 functions as the Nucleophile in the catalytic mechanism. Lys-163 lines the FMN pocket. Residue 189–190 coordinates substrate; the sequence is NT. FMN-binding positions include Gly-214, 240-241, and 262-263; these read GG and GS.

This sequence belongs to the dihydroorotate dehydrogenase family. Type 1 subfamily. In terms of assembly, heterotetramer of 2 PyrK and 2 PyrD type B subunits. FMN serves as cofactor.

The protein localises to the cytoplasm. The enzyme catalyses (S)-dihydroorotate + NAD(+) = orotate + NADH + H(+). Its pathway is pyrimidine metabolism; UMP biosynthesis via de novo pathway; orotate from (S)-dihydroorotate (NAD(+) route): step 1/1. Catalyzes the conversion of dihydroorotate to orotate with NAD(+) as electron acceptor. The sequence is that of Dihydroorotate dehydrogenase B (NAD(+)), catalytic subunit (pyrD) from Archaeoglobus fulgidus (strain ATCC 49558 / DSM 4304 / JCM 9628 / NBRC 100126 / VC-16).